The chain runs to 2483 residues: Cation-independent mannose-6-phosphate receptor (2483 aa).

Residues 1–35 (MRAVQLGPVPSGPRVALLPPLLLLLLLAAAGSAQA) form the signal peptide. Over 36–2295 (QAVDLDALCS…YKGLSERSQA (2260 aa)) the chain is Lumenal. MRH domains are found at residues 42-158 (ALCS…ACKK), 167-315 (VPCY…ACHR), 321-463 (ESCS…ACIK), 468-613 (LLCG…ACVL), 619-755 (ENCT…ACPE), 758-917 (LECM…ACPI), 925-1072 (QACS…ACTP), 1075-1212 (VDCQ…ACPV), and 1218-1356 (DNCQ…ACPP). 2 cysteine pairs are disulfide-bonded: Cys44–Cys64 and Cys72–Cys79. Asn107 carries an N-linked (GlcNAc...) asparagine glycan. 8 disulfides stabilise this stretch: Cys112–Cys144, Cys129–Cys156, Cys169–Cys207, Cys223–Cys230, Cys270–Cys301, Cys283–Cys313, Cys323–Cys361, and Cys369–Cys377. Asn395 and Asn430 each carry an N-linked (GlcNAc...) asparagine glycan. 4 disulfides stabilise this stretch: Cys415–Cys449, Cys429–Cys461, Cys470–Cys513, and Cys525–Cys532. Residues Asn537 and Asn575 are each glycosylated (N-linked (GlcNAc...) asparagine). Cystine bridges form between Cys566–Cys599 and Cys580–Cys611. Asn620 carries N-linked (GlcNAc...) asparagine glycosylation. 5 disulfide bridges follow: Cys621–Cys658, Cys666–Cys673, Cys724–Cys753, Cys760–Cys807, and Cys816–Cys823. Asn740 carries N-linked (GlcNAc...) asparagine glycosylation. N-linked (GlcNAc...) asparagine glycosylation is present at Asn864. Cystine bridges form between Cys868–Cys903, Cys886–Cys915, Cys927–Cys964, Cys970–Cys981, Cys1035–Cys1070, Cys1077–Cys1118, and Cys1127–Cys1135. The N-linked (GlcNAc...) asparagine glycan is linked to Asn944. N-linked (GlcNAc...) asparagine glycosylation is present at Asn1157. 4 disulfides stabilise this stretch: Cys1170–Cys1198, Cys1183–Cys1210, Cys1220–Cys1255, and Cys1263–Cys1275. The N-linked (GlcNAc...) asparagine glycan is linked to Asn1239. Asn1305 carries an N-linked (GlcNAc...) asparagine glycan. 2 disulfide bridges follow: Cys1312-Cys1342 and Cys1326-Cys1354. N-linked (GlcNAc...) asparagine glycosylation occurs at Asn1358. MRH domains lie at 1360–1501 (TECS…ACPV), 1507–1641 (DDCQ…ACEQ), 1643–1790 (TECT…VCPD), 1795–1982 (QGCA…VCPP), 1985–2120 (MECK…ACAV), and 2128–2273 (VNGT…VCPL). 2 disulfides stabilise this stretch: Cys1362-Cys1401 and Cys1413-Cys1420. Residue Asn1423 is glycosylated (N-linked (GlcNAc...) asparagine). Cystine bridges form between Cys1454-Cys1487, Cys1469-Cys1499, Cys1509-Cys1546, Cys1552-Cys1559, Cys1591-Cys1627, Cys1607-Cys1639, Cys1645-Cys1688, Cys1699-Cys1706, Cys1743-Cys1776, Cys1759-Cys1788, Cys1797-Cys1832, Cys1843-Cys1849, Cys1886-Cys1968, Cys1896-Cys1920, Cys1910-Cys1935, Cys1950-Cys1980, Cys1987-Cys2022, Cys2032-Cys2039, Cys2075-Cys2106, and Cys2089-Cys2118. Asn1532 is a glycosylation site (N-linked (GlcNAc...) asparagine). Asn1649 carries N-linked (GlcNAc...) asparagine glycosylation. Asn1750 carries N-linked (GlcNAc...) asparagine glycosylation. Asn1809 carries N-linked (GlcNAc...) asparagine glycosylation. Positions 1891-1937 (DDGEPCVFPFIYKGKSYDECVLEGRAKLWCSKTANYDRDHEWGFCRQ) constitute a Fibronectin type-II domain. N-linked (GlcNAc...) asparagine glycosylation is present at Asn2078. A glycan (N-linked (GlcNAc...) asparagine) is linked at Asn2129. 3 disulfides stabilise this stretch: Cys2181–Cys2187, Cys2225–Cys2259, and Cys2241–Cys2271. Residues 2296–2316 (VGAVLSLLLVALTGCLLALLL) traverse the membrane as a helical segment. Topologically, residues 2317 to 2483 (HKKERRETVI…DDSDEDLLHI (167 aa)) are cytoplasmic. Lys2342 bears the N6-acetyllysine mark. The residue at position 2401 (Ser2401) is a Phosphoserine. The tract at residues 2415–2483 (SGRGAEVESS…DDSDEDLLHI (69 aa)) is disordered. Position 2417 is an omega-N-methylarginine (Arg2417). Composition is skewed to basic and acidic residues over residues 2434 to 2451 (VLKE…GEKA) and 2471 to 2483 (SFHD…LLHI). A phosphoserine mark is found at Ser2471 and Ser2476.

The protein belongs to the MRL1/IGF2R family. As to quaternary structure, binds HA-I and HA-II plasma membrane adapters. Interacts with DPP4; the interaction is direct. Binds GGA1, GGA2 and GGA3. Interacts with the heterotrimeric retromer cargo-selective complex (CSC), formed by VPS26 (VPS26A or VPS26B), VPS29 and VPS35; which is involved in retrograde trafficking of the receptor from endosomes to the Golgi apparatus. Post-translationally, palmitoylated. Undergoes cysteine S-palmitoylation which promotes interaction with the retromer cargo-selective complex which mediates its retrograde trafficking to the Golgi apparatus.

The protein localises to the golgi apparatus membrane. Its subcellular location is the endosome membrane. Its function is as follows. Mediates the transport of phosphorylated lysosomal enzymes from the Golgi complex and the cell surface to lysosomes. Lysosomal enzymes bearing phosphomannosyl residues bind specifically to mannose-6-phosphate receptors in the Golgi apparatus and the resulting receptor-ligand complex is transported to an acidic prelysosomal compartment where the low pH mediates the dissociation of the complex. The receptor is then recycled back to the Golgi for another round of trafficking through its binding to the retromer. This receptor also binds IGF2. Acts as a positive regulator of T-cell coactivation by binding DPP4. This Mus musculus (Mouse) protein is Cation-independent mannose-6-phosphate receptor (Igf2r).